We begin with the raw amino-acid sequence, 318 residues long: DNA primase small subunit PriS (318 aa).

Residues Asp-95, Asp-97, and Asp-224 contribute to the active site.

Belongs to the eukaryotic-type primase small subunit family. In terms of assembly, heterodimer of a small subunit (PriS) and a large subunit (PriL). Mg(2+) serves as cofactor. It depends on Mn(2+) as a cofactor.

Catalytic subunit of DNA primase, an RNA polymerase that catalyzes the synthesis of short RNA molecules used as primers for DNA polymerase during DNA replication. The small subunit contains the primase catalytic core and has DNA synthesis activity on its own. Binding to the large subunit stabilizes and modulates the activity, increasing the rate of DNA synthesis while decreasing the length of the DNA fragments, and conferring RNA synthesis capability. The DNA polymerase activity may enable DNA primase to also catalyze primer extension after primer synthesis. May also play a role in DNA repair. This chain is DNA primase small subunit PriS, found in Sulfurisphaera tokodaii (strain DSM 16993 / JCM 10545 / NBRC 100140 / 7) (Sulfolobus tokodaii).